The following is a 483-amino-acid chain: Glutamyl-tRNA(Gln) amidotransferase subunit A (483 aa).

Active-site charge relay system residues include K76 and S151. S175 functions as the Acyl-ester intermediate in the catalytic mechanism.

Belongs to the amidase family. GatA subfamily. In terms of assembly, heterotrimer of A, B and C subunits.

It catalyses the reaction L-glutamyl-tRNA(Gln) + L-glutamine + ATP + H2O = L-glutaminyl-tRNA(Gln) + L-glutamate + ADP + phosphate + H(+). Allows the formation of correctly charged Gln-tRNA(Gln) through the transamidation of misacylated Glu-tRNA(Gln) in organisms which lack glutaminyl-tRNA synthetase. The reaction takes place in the presence of glutamine and ATP through an activated gamma-phospho-Glu-tRNA(Gln). This is Glutamyl-tRNA(Gln) amidotransferase subunit A from Coxiella burnetii (strain CbuK_Q154) (Coxiella burnetii (strain Q154)).